The sequence spans 317 residues: 4-hydroxy-3-methylbut-2-enyl diphosphate reductase (317 aa).

Cysteine 12 lines the [4Fe-4S] cluster pocket. (2E)-4-hydroxy-3-methylbut-2-enyl diphosphate is bound by residues histidine 41 and histidine 74. The dimethylallyl diphosphate site is built by histidine 41 and histidine 74. Positions 41 and 74 each coordinate isopentenyl diphosphate. [4Fe-4S] cluster is bound at residue cysteine 97. Position 125 (histidine 125) interacts with (2E)-4-hydroxy-3-methylbut-2-enyl diphosphate. Histidine 125 is a binding site for dimethylallyl diphosphate. Position 125 (histidine 125) interacts with isopentenyl diphosphate. Catalysis depends on glutamate 127, which acts as the Proton donor. Threonine 168 is a binding site for (2E)-4-hydroxy-3-methylbut-2-enyl diphosphate. Residue cysteine 198 participates in [4Fe-4S] cluster binding. (2E)-4-hydroxy-3-methylbut-2-enyl diphosphate contacts are provided by serine 226, serine 227, asparagine 228, and serine 270. Residues serine 226, serine 227, asparagine 228, and serine 270 each coordinate dimethylallyl diphosphate. 4 residues coordinate isopentenyl diphosphate: serine 226, serine 227, asparagine 228, and serine 270.

The protein belongs to the IspH family. In terms of assembly, homodimer. [4Fe-4S] cluster is required as a cofactor.

It carries out the reaction isopentenyl diphosphate + 2 oxidized [2Fe-2S]-[ferredoxin] + H2O = (2E)-4-hydroxy-3-methylbut-2-enyl diphosphate + 2 reduced [2Fe-2S]-[ferredoxin] + 2 H(+). The enzyme catalyses dimethylallyl diphosphate + 2 oxidized [2Fe-2S]-[ferredoxin] + H2O = (2E)-4-hydroxy-3-methylbut-2-enyl diphosphate + 2 reduced [2Fe-2S]-[ferredoxin] + 2 H(+). It functions in the pathway isoprenoid biosynthesis; dimethylallyl diphosphate biosynthesis; dimethylallyl diphosphate from (2E)-4-hydroxy-3-methylbutenyl diphosphate: step 1/1. It participates in isoprenoid biosynthesis; isopentenyl diphosphate biosynthesis via DXP pathway; isopentenyl diphosphate from 1-deoxy-D-xylulose 5-phosphate: step 6/6. Catalyzes the conversion of 1-hydroxy-2-methyl-2-(E)-butenyl 4-diphosphate (HMBPP) into a mixture of isopentenyl diphosphate (IPP) and dimethylallyl diphosphate (DMAPP). Acts in the terminal step of the DOXP/MEP pathway for isoprenoid precursor biosynthesis. The protein is 4-hydroxy-3-methylbut-2-enyl diphosphate reductase of Yersinia pseudotuberculosis serotype IB (strain PB1/+).